The sequence spans 491 residues: Immediate early protein IE1 (491 aa).

Residues 1-11 (MESSAKRKMDP) are compositionally biased toward basic and acidic residues. Residues 1–24 (MESSAKRKMDPDNPDEGPSSKVPR) form a nuclear localization signal region. A disordered region spans residues 1–30 (MESSAKRKMDPDNPDEGPSSKVPRPETPVT). The interaction with host PML, interference with PML sumoylation and disruption of PML-associated nuclear bodies stretch occupies residues 132–346 (ILDKVHEPFE…SVMKRRIEEI (215 aa)). The tract at residues 373–445 (AIAEESDEEE…EEGAQEERED (73 aa)) is interaction with host STAT2. The modulation of STAT3/STAT1 signaling stretch occupies residues 410-420 (ATIPLSSVIVA). Positions 410–445 (ATIPLSSVIVAENSDQEESEQSDEEQEEGAQEERED) are interaction with host STAT3. Residues 421–472 (ENSDQEESEQSDEEQEEGAQEEREDTVSVKSEPVSEIEEVASEEEEDGAEEP) are acidic. Positions 421 to 491 (ENSDQEESEQ…PMVTRSKADQ (71 aa)) are disordered. Over residues 423–444 (SDQEESEQSDEEQEEGAQEERE) the composition is skewed to acidic residues. An interaction with host SUMO1 region spans residues 449 to 452 (VKSE). Lys450 is covalently cross-linked (Glycyl lysine isopeptide (Lys-Gly) (interchain with G-Cter in SUMO)). The segment covering 455-470 (SEIEEVASEEEEDGAE) has biased composition (acidic residues). The segment at 475–491 (SGGKSTHPMVTRSKADQ) is chromosome-tethering domain (CTD), binding to histones.

This sequence belongs to the HHV-5 IE1 protein family. As to quaternary structure, forms homodimers. Interacts with human p53/TP53; this interaction inhibits p53/TP53-dependent transactivation activity. Interacts with host STAT1. Interacts with host STAT2; this interaction promotes viral growth and counteracts the antiviral interferon response. May also interact with the host STAT1-STAT2 heterodimer. Interacts with host STAT3; this interaction leads to STAT3 nuclear accumulation and disruption of IL6-induced STAT3 phosphorylation. Interacts with host PML; this interaction probably inhibits PML regulation of type I and type II interferon-induced gene expression. Interacts with host DAXX. Interacts with host SP100. Interacts with host E2F1. Interacts with host RB1. Interacts with host HDAC1; this interaction inhibits histone deacetylation and promotes viral transcription. Interacts with host HDAC2; this interaction inhibits histone deacetylation and promotes viral transcription. Interacts with host HDAC3; this interaction inhibits histone deacetylation and promotes viral transcription. Interacts with host PLSCR1; this interaction inhibits IE1 transactivating activity. Sumoylated by host PML/nuclear domain 10. Sumoylation abolishes the interaction with host STAT2 and thus the IE1-mediated repression of interferon-stimulated genes.

The protein resides in the host nucleus. Its function is as follows. Plays an important role in transactivating viral early genes as well as activating its own promoter, probably by altering the viral chromatin structure. Expression of IE1 and IE2 proteins is critical for the establishment of lytic infection and reactivation from viral latency. Disrupts PML-associated ND10 nuclear bodies by interfering with host PML and SP100 sumoylation thereby altering the regulation of type I and type II interferon-induced gene expression. Promotes efficient viral growth by interacting with and directing host SP100 to degradation, leading to enhanced acetylation level of histones. In addition, functions in counteracting the host innate antiviral response. Inhibits the type I interferon pathway by directly interacting with and sequestrating host STAT2. Also targets type II interferon pathway by repressing IL6- and STAT3 target genes. Repression of STAT3 genes is due to STAT3 nuclear accumulation and disruption of IL6-induced STAT3 phosphorylation by IE1. This repression is followed by phosphorylation and activation of STAT1. Inhibits host ISG transcription by sequestering host ISGF3 in a PML- and STAT2- binding dependent manner. Alters host cell cycle progression, probably through its interaction with host E2F1 or RB1 that overcomes the RB1-mediated repression of E2F-responsive promoters. The polypeptide is Immediate early protein IE1 (UL123) (Human cytomegalovirus (strain Merlin) (HHV-5)).